Reading from the N-terminus, the 327-residue chain is Phenylalanine--tRNA ligase alpha subunit (327 aa).

Mg(2+) is bound at residue Glu252.

Belongs to the class-II aminoacyl-tRNA synthetase family. Phe-tRNA synthetase alpha subunit type 1 subfamily. In terms of assembly, tetramer of two alpha and two beta subunits. Mg(2+) is required as a cofactor.

The protein resides in the cytoplasm. The enzyme catalyses tRNA(Phe) + L-phenylalanine + ATP = L-phenylalanyl-tRNA(Phe) + AMP + diphosphate + H(+). In Pectobacterium carotovorum subsp. carotovorum (strain PC1), this protein is Phenylalanine--tRNA ligase alpha subunit.